We begin with the raw amino-acid sequence, 461 residues long: Pyruvate kinase (461 aa).

Substrate is bound at residue Arg-46. 2 residues coordinate K(+): Asn-48 and Asp-80. An ATP-binding site is contributed by 48–51 (NLAH). 2 residues coordinate ATP: Arg-87 and Lys-165. Glu-232 is a binding site for Mg(2+). Gly-255, Asp-256, and Thr-288 together coordinate substrate. Residue Asp-256 participates in Mg(2+) binding.

Belongs to the pyruvate kinase family. In terms of assembly, homotetramer. A divalent metal cation is required as a cofactor.

It carries out the reaction pyruvate + ATP = phosphoenolpyruvate + ADP + H(+). It functions in the pathway carbohydrate degradation; glycolysis; pyruvate from D-glyceraldehyde 3-phosphate: step 5/5. Its activity is regulated as follows. Not activated by classical allosteric effectors. This chain is Pyruvate kinase (pyk), found in Pyrobaculum aerophilum (strain ATCC 51768 / DSM 7523 / JCM 9630 / CIP 104966 / NBRC 100827 / IM2).